A 972-amino-acid chain; its full sequence is mRNA transport regulator MTR10 (972 aa).

The protein localises to the nucleus. Involved in mRNA transport from nucleus to cytoplasm. This Saccharomyces cerevisiae (strain ATCC 204508 / S288c) (Baker's yeast) protein is mRNA transport regulator MTR10 (MTR10).